Consider the following 214-residue polypeptide: Cdc42 effector protein 2 (214 aa).

Position 2 is an N-acetylserine (S2). The region spanning 30–44 is the CRIB domain; that stretch reads ISPPLGDFRHTIHIG. S31, S101, S137, S141, and S145 each carry phosphoserine. Positions 118 to 151 are disordered; sequence ALTLPTTQAPPKPPRLHLESPQPSPKSSPQEAGN.

The protein belongs to the BORG/CEP family. In terms of assembly, interacts with CDC42 and RHOQ, in a GTP-dependent manner, and with SEPT7.

It localises to the endomembrane system. Its subcellular location is the cytoplasm. It is found in the cytoskeleton. Its function is as follows. Probably involved in the organization of the actin cytoskeleton. May act downstream of CDC42 to induce actin filament assembly leading to cell shape changes. Induces pseudopodia formation in fibroblasts in a CDC42-dependent manner. The sequence is that of Cdc42 effector protein 2 (Cdc42ep2) from Rattus norvegicus (Rat).